The primary structure comprises 933 residues: Isoleucine--tRNA ligase (933 aa).

The 'HIGH' region motif lies at proline 57–histidine 67. Residue glutamate 556 coordinates L-isoleucyl-5'-AMP. The 'KMSKS' region signature appears at lysine 597–serine 601. Lysine 600 is a binding site for ATP. Cysteine 891, cysteine 894, cysteine 911, and cysteine 914 together coordinate Zn(2+).

This sequence belongs to the class-I aminoacyl-tRNA synthetase family. IleS type 1 subfamily. In terms of assembly, monomer. The cofactor is Zn(2+).

The protein resides in the cytoplasm. The enzyme catalyses tRNA(Ile) + L-isoleucine + ATP = L-isoleucyl-tRNA(Ile) + AMP + diphosphate. Catalyzes the attachment of isoleucine to tRNA(Ile). As IleRS can inadvertently accommodate and process structurally similar amino acids such as valine, to avoid such errors it has two additional distinct tRNA(Ile)-dependent editing activities. One activity is designated as 'pretransfer' editing and involves the hydrolysis of activated Val-AMP. The other activity is designated 'posttransfer' editing and involves deacylation of mischarged Val-tRNA(Ile). This Pediococcus pentosaceus (strain ATCC 25745 / CCUG 21536 / LMG 10740 / 183-1w) protein is Isoleucine--tRNA ligase.